Here is a 308-residue protein sequence, read N- to C-terminus: Taste receptor type 2 member 43 (308 aa).

Position 1 (Met-1) is a topological domain, extracellular. The helical transmembrane segment at 2 to 22 (ITFLPIIFSILVVFTFVIGNF) threads the bilayer. At 23–46 (ANGFIALVNSIEWVKRQKISFADQ) the chain is on the cytoplasmic side. A helical transmembrane segment spans residues 47-67 (ILTALAVSRVGLLWILLLNWY). Residues 68–86 (STVLNPAFYSVEVRTIAYN) lie on the Extracellular side of the membrane. Residues 87 to 107 (LWAVINHFSNWLATSLSIFYL) traverse the membrane as a helical segment. Topologically, residues 108–126 (LKIANFSNLIFLHLRRRVK) are cytoplasmic. A helical transmembrane segment spans residues 127-147 (SVVLVILWGPLLFLVCHLFVV). The Extracellular portion of the chain corresponds to 148-178 (NMNEIIQTKEYEGNMTWKSKLRSAMYLSNTT). N-linked (GlcNAc...) asparagine glycans are attached at residues Asn-161 and Asn-176. The chain crosses the membrane as a helical span at residues 179 to 199 (VTILANLVPFILTLISFLLLI). Over 200–229 (CSLCKHLKKMQLRDKGSQDPSTKVHIKALQ) the chain is Cytoplasmic. A helical transmembrane segment spans residues 230–249 (TVISLSLCAIYFLSIMISSW). At 250-258 (SLGRVENKA) the chain is on the extracellular side. The chain crosses the membrane as a helical span at residues 259–279 (IFMFCKAIRFSYPSAHAFILI). The Cytoplasmic portion of the chain corresponds to 280 to 308 (WGNKKLKQTLLSVLWNVRYCVKGQKLQSP).

Belongs to the G-protein coupled receptor T2R family.

The protein localises to the membrane. It is found in the cell projection. It localises to the cilium membrane. Gustducin-coupled receptor immplicated in the perception of bitter compounds in the oral cavity and the gastrointestinal tract. Signals through PLCB2 and the calcium-regulated cation channel TRPM5. Activated by the sulfonyl amide sweeteners saccharin and acesulfame K. In airway epithelial cells, binding of bitter compounds increases the intracellular calcium ion concentration and stimulates ciliary beat frequency. May act as chemosensory receptors in airway epithelial cells to detect and eliminate potential noxious agents from the airways. This Macaca mulatta (Rhesus macaque) protein is Taste receptor type 2 member 43 (TAS2R43).